Reading from the N-terminus, the 262-residue chain is Tetratricopeptide repeat protein 33 (262 aa).

The segment at 17-63 is disordered; it reads ATSQQFEAEAADEKDAAENEDGNWLQASKRRKETLQEGCKQRSQQLK. 3 TPR repeats span residues 59–92, 93–126, and 127–160; these read SQQLKDEGAQLAENKRYKEAIQKWDEALQLTPGD, ATLYEMKSQVLLSLHEMFPAVHAAEMAVKRNPHS, and WEAWQTLGRAQLGLGEIVLAIRSFQIALHIYPMN. The residue at position 197 (Ser-197) is a Phosphoserine.

This chain is Tetratricopeptide repeat protein 33 (Ttc33), found in Mus musculus (Mouse).